We begin with the raw amino-acid sequence, 476 residues long: NADH-quinone oxidoreductase subunit N (476 aa).

The next 14 membrane-spanning stretches (helical) occupy residues 8–28 (ITTELALFILGLATFVLGLLV), 35–55 (GLGSFALLGLLLVLGITIINW), 71–91 (YATFFKILCLISAILVVLGSF), 102–122 (FEYYSTVIFTTLGMVVMASAG), 124–144 (FITLYLGLELMTISFVILVAF), 159–179 (ILLAGLSSAVLLYGLSLVYGA), 201–221 (LIVGVVMLVAGLGFKISAVPF), 239–259 (FLAVGSKAASFAVLLRLFAGG), 267–287 (WTLLVAVLAALSMLIGNLVAI), 295–315 (MLAYSSIAQAGYIMVGLVSAT), 322–342 (VMFYAFLYVFATIGAFTVVAI), 366–386 (ASVMLICLLSMAGIPPLAGFV), 405–425 (LGLIMSMVSVYYYLRVALVMF), and 437–457 (VGGAATITLVITMVATIILGI).

This sequence belongs to the complex I subunit 2 family. In terms of assembly, NDH-1 is composed of 14 different subunits. Subunits NuoA, H, J, K, L, M, N constitute the membrane sector of the complex.

The protein resides in the cell membrane. It carries out the reaction a quinone + NADH + 5 H(+)(in) = a quinol + NAD(+) + 4 H(+)(out). NDH-1 shuttles electrons from NADH, via FMN and iron-sulfur (Fe-S) centers, to quinones in the respiratory chain. The immediate electron acceptor for the enzyme in this species is believed to be a menaquinone. Couples the redox reaction to proton translocation (for every two electrons transferred, four hydrogen ions are translocated across the cytoplasmic membrane), and thus conserves the redox energy in a proton gradient. The sequence is that of NADH-quinone oxidoreductase subunit N from Desulforamulus reducens (strain ATCC BAA-1160 / DSM 100696 / MI-1) (Desulfotomaculum reducens).